Here is a 248-residue protein sequence, read N- to C-terminus: 1-(5-phosphoribosyl)-5-[(5-phosphoribosylamino)methylideneamino] imidazole-4-carboxamide isomerase (248 aa).

Residue aspartate 8 is the Proton acceptor of the active site. Aspartate 127 (proton donor) is an active-site residue.

The protein belongs to the HisA/HisF family.

It is found in the cytoplasm. The enzyme catalyses 1-(5-phospho-beta-D-ribosyl)-5-[(5-phospho-beta-D-ribosylamino)methylideneamino]imidazole-4-carboxamide = 5-[(5-phospho-1-deoxy-D-ribulos-1-ylimino)methylamino]-1-(5-phospho-beta-D-ribosyl)imidazole-4-carboxamide. It functions in the pathway amino-acid biosynthesis; L-histidine biosynthesis; L-histidine from 5-phospho-alpha-D-ribose 1-diphosphate: step 4/9. This chain is 1-(5-phosphoribosyl)-5-[(5-phosphoribosylamino)methylideneamino] imidazole-4-carboxamide isomerase, found in Thermotoga neapolitana (strain ATCC 49049 / DSM 4359 / NBRC 107923 / NS-E).